A 236-amino-acid polypeptide reads, in one-letter code: 5'-methylthioadenosine/S-adenosylhomocysteine nucleosidase (236 aa).

The active-site Proton acceptor is the Glu12. Substrate contacts are provided by residues Gly78, Ile153, and 174-175; that span reads ME. Residue Asp198 is the Proton donor of the active site.

The protein belongs to the PNP/UDP phosphorylase family. MtnN subfamily.

The catalysed reaction is S-adenosyl-L-homocysteine + H2O = S-(5-deoxy-D-ribos-5-yl)-L-homocysteine + adenine. It catalyses the reaction S-methyl-5'-thioadenosine + H2O = 5-(methylsulfanyl)-D-ribose + adenine. The enzyme catalyses 5'-deoxyadenosine + H2O = 5-deoxy-D-ribose + adenine. Its pathway is amino-acid biosynthesis; L-methionine biosynthesis via salvage pathway; S-methyl-5-thio-alpha-D-ribose 1-phosphate from S-methyl-5'-thioadenosine (hydrolase route): step 1/2. In terms of biological role, catalyzes the irreversible cleavage of the glycosidic bond in both 5'-methylthioadenosine (MTA) and S-adenosylhomocysteine (SAH/AdoHcy) to adenine and the corresponding thioribose, 5'-methylthioribose and S-ribosylhomocysteine, respectively. Also cleaves 5'-deoxyadenosine, a toxic by-product of radical S-adenosylmethionine (SAM) enzymes, into 5-deoxyribose and adenine. The protein is 5'-methylthioadenosine/S-adenosylhomocysteine nucleosidase of Shewanella oneidensis (strain ATCC 700550 / JCM 31522 / CIP 106686 / LMG 19005 / NCIMB 14063 / MR-1).